Consider the following 589-residue polypeptide: Phosphoenolpyruvate carboxykinase [GTP] (589 aa).

Substrate contacts are provided by residues arginine 75 and 207 to 209 (YGG). Residues lysine 216 and histidine 236 each coordinate Mn(2+). Residue serine 258 coordinates substrate. 259–264 (ASGKTN) contributes to the GTP binding site. Serine 260 is an active-site residue. Aspartate 287 provides a ligand contact to Mn(2+). Position 374-376 (374-376 (NSR)) interacts with substrate. GTP contacts are provided by residues arginine 376, arginine 407, and 500–503 (FAEN).

It belongs to the phosphoenolpyruvate carboxykinase [GTP] family. It depends on Mn(2+) as a cofactor.

It is found in the cytoplasm. It carries out the reaction oxaloacetate + GTP = phosphoenolpyruvate + GDP + CO2. The protein operates within carbohydrate biosynthesis; gluconeogenesis. In terms of biological role, catalyzes the conversion of oxaloacetate (OAA) to phosphoenolpyruvate (PEP), the rate-limiting step in the metabolic pathway that produces glucose from lactate and other precursors derived from the citric acid cycle. This chain is Phosphoenolpyruvate carboxykinase [GTP], found in Thermoplasma volcanium (strain ATCC 51530 / DSM 4299 / JCM 9571 / NBRC 15438 / GSS1).